The chain runs to 234 residues: Large ribosomal subunit protein uL1 (234 aa).

The protein belongs to the universal ribosomal protein uL1 family. In terms of assembly, part of the 50S ribosomal subunit.

In terms of biological role, binds directly to 23S rRNA. The L1 stalk is quite mobile in the ribosome, and is involved in E site tRNA release. Its function is as follows. Protein L1 is also a translational repressor protein, it controls the translation of the L11 operon by binding to its mRNA. In Psychromonas ingrahamii (strain DSM 17664 / CCUG 51855 / 37), this protein is Large ribosomal subunit protein uL1.